The sequence spans 215 residues: Ribonuclease T (215 aa).

Positions 20–194 constitute an Exonuclease domain; the sequence is VVIDVETAGF…YDTERTAVLF (175 aa). Mg(2+) is bound by residues aspartate 23, glutamate 25, histidine 181, and aspartate 186. The active-site Proton donor/acceptor is the histidine 181.

This sequence belongs to the RNase T family. As to quaternary structure, homodimer. Mg(2+) serves as cofactor.

Functionally, trims short 3' overhangs of a variety of RNA species, leaving a one or two nucleotide 3' overhang. Responsible for the end-turnover of tRNA: specifically removes the terminal AMP residue from uncharged tRNA (tRNA-C-C-A). Also appears to be involved in tRNA biosynthesis. This Salmonella choleraesuis (strain SC-B67) protein is Ribonuclease T.